Consider the following 159-residue polypeptide: Eukaryotic translation initiation factor 5A-4 (159 aa).

Over residues 1–12 (MSDEEHQFESKA) the composition is skewed to basic and acidic residues. Residues 1–21 (MSDEEHQFESKADAGASKTYP) are disordered. Lysine 52 is subject to Hypusine.

The protein belongs to the eIF-5A family. Post-translationally, lys-52 undergoes hypusination, a unique post-translational modification that consists in the addition of a butylamino group from spermidine to lysine side chain, leading to the formation of the unusual amino acid hypusine. eIF-5As are the only known proteins to undergo this modification, which is essential for their function.

In terms of biological role, translation factor that promotes translation elongation and termination, particularly upon ribosome stalling at specific amino acid sequence contexts. Binds between the exit (E) and peptidyl (P) site of the ribosome and promotes rescue of stalled ribosome: specifically required for efficient translation of polyproline-containing peptides as well as other motifs that stall the ribosome. Acts as a ribosome quality control (RQC) cofactor by joining the RQC complex to facilitate peptidyl transfer during CAT tailing step. The chain is Eukaryotic translation initiation factor 5A-4 (EIF5A4) from Solanum tuberosum (Potato).